We begin with the raw amino-acid sequence, 20 residues long: Cytochrome c oxidase subunit 5A-1, mitochondrial (20 aa).

Belongs to the cytochrome c oxidase subunit 5A family. As to quaternary structure, component of the cytochrome c oxidase (complex IV, CIV), a multisubunit enzyme composed of 14 subunits. The complex is composed of a catalytic core of 3 subunits MT-CO1, MT-CO2 and MT-CO3, encoded in the mitochondrial DNA, and 11 supernumerary subunits COX4I, COX5A, COX5B, COX6A, COX6B, COX6C, COX7A, COX7B, COX7C, COX8 and NDUFA4, which are encoded in the nuclear genome. The complex exists as a monomer or a dimer and forms supercomplexes (SCs) in the inner mitochondrial membrane with NADH-ubiquinone oxidoreductase (complex I, CI) and ubiquinol-cytochrome c oxidoreductase (cytochrome b-c1 complex, complex III, CIII), resulting in different assemblies (supercomplex SCI(1)III(2)IV(1) and megacomplex MCI(2)III(2)IV(2)). Interacts with AFG1L. Interacts with RAB5IF.

The protein localises to the mitochondrion inner membrane. The protein operates within energy metabolism; oxidative phosphorylation. Functionally, component of the cytochrome c oxidase, the last enzyme in the mitochondrial electron transport chain which drives oxidative phosphorylation. The respiratory chain contains 3 multisubunit complexes succinate dehydrogenase (complex II, CII), ubiquinol-cytochrome c oxidoreductase (cytochrome b-c1 complex, complex III, CIII) and cytochrome c oxidase (complex IV, CIV), that cooperate to transfer electrons derived from NADH and succinate to molecular oxygen, creating an electrochemical gradient over the inner membrane that drives transmembrane transport and the ATP synthase. Cytochrome c oxidase is the component of the respiratory chain that catalyzes the reduction of oxygen to water. Electrons originating from reduced cytochrome c in the intermembrane space (IMS) are transferred via the dinuclear copper A center (CU(A)) of subunit 2 and heme A of subunit 1 to the active site in subunit 1, a binuclear center (BNC) formed by heme A3 and copper B (CU(B)). The BNC reduces molecular oxygen to 2 water molecules using 4 electrons from cytochrome c in the IMS and 4 protons from the mitochondrial matrix. In Thunnus obesus (Bigeye tuna), this protein is Cytochrome c oxidase subunit 5A-1, mitochondrial.